Here is a 241-residue protein sequence, read N- to C-terminus: 6-phosphogluconolactonase (241 aa).

The protein belongs to the glucosamine/galactosamine-6-phosphate isomerase family. 6-phosphogluconolactonase subfamily.

The enzyme catalyses 6-phospho-D-glucono-1,5-lactone + H2O = 6-phospho-D-gluconate + H(+). It participates in carbohydrate degradation; pentose phosphate pathway; D-ribulose 5-phosphate from D-glucose 6-phosphate (oxidative stage): step 2/3. Functionally, hydrolysis of 6-phosphogluconolactone to 6-phosphogluconate. The protein is 6-phosphogluconolactonase (pgl) of Treponema pallidum (strain Nichols).